Consider the following 311-residue polypeptide: Ribonuclease HIII (311 aa).

The region spanning 95 to 311 is the RNase H type-2 domain; it reads MSIVGSDEVG…NTEKALRLLR (217 aa). A divalent metal cation is bound by residues Asp101, Glu102, and Asp206.

Belongs to the RNase HII family. RnhC subfamily. The cofactor is Mn(2+). It depends on Mg(2+) as a cofactor.

It is found in the cytoplasm. It carries out the reaction Endonucleolytic cleavage to 5'-phosphomonoester.. In terms of biological role, endonuclease that specifically degrades the RNA of RNA-DNA hybrids. The polypeptide is Ribonuclease HIII (Bacillus cereus (strain ATCC 14579 / DSM 31 / CCUG 7414 / JCM 2152 / NBRC 15305 / NCIMB 9373 / NCTC 2599 / NRRL B-3711)).